A 726-amino-acid chain; its full sequence is Catalase-peroxidase (726 aa).

Positions 1–33 (MSTTDDTHNTLSAGKCPFHQGGHDRSAGAGTAS) are disordered. A cross-link (tryptophyl-tyrosyl-methioninium (Trp-Tyr) (with M-252)) is located at residues 105-226 (WHGAGTYRSI…LGATEMGLIY (122 aa)). Histidine 106 functions as the Proton acceptor in the catalytic mechanism. The segment at residues 226–252 (YVNPEGPDHSGEPLSAAAAIRATFGNM) is a cross-link (tryptophyl-tyrosyl-methioninium (Tyr-Met) (with W-105)). Residue histidine 267 coordinates heme b.

This sequence belongs to the peroxidase family. Peroxidase/catalase subfamily. As to quaternary structure, homodimer or homotetramer. It depends on heme b as a cofactor. In terms of processing, formation of the three residue Trp-Tyr-Met cross-link is important for the catalase, but not the peroxidase activity of the enzyme.

The enzyme catalyses H2O2 + AH2 = A + 2 H2O. It carries out the reaction 2 H2O2 = O2 + 2 H2O. Functionally, bifunctional enzyme with both catalase and broad-spectrum peroxidase activity. The protein is Catalase-peroxidase of Salmonella arizonae (strain ATCC BAA-731 / CDC346-86 / RSK2980).